The chain runs to 568 residues: Natural resistance-associated macrophage protein 2 (568 aa).

Residues 1 to 20 show a composition bias toward basic and acidic residues; sequence MVLDPKEKMPDDGASGDHGD. The disordered stretch occupies residues 1 to 45; sequence MVLDPKEKMPDDGASGDHGDSASLGAINPAYSNSSLPHSTGDSEE. The Cytoplasmic portion of the chain corresponds to 1–69; it reads MVLDPKEKMP…EEYSCFSFRK (69 aa). The span at 30-40 shows a compositional bias: polar residues; that stretch reads AYSNSSLPHST. A helical transmembrane segment spans residues 70–90; it reads LWAFTGPGFLMSIAYLDPGNI. The Extracellular portion of the chain corresponds to 91 to 95; sequence ESDLQ. The chain crosses the membrane as a helical span at residues 96–117; that stretch reads SGAVAGFKLLWVLLLATIVGLL. Residues 118 to 154 are Cytoplasmic-facing; that stretch reads LQRLAARLGVVTGLHLAEVCHRQYPKVPRIILWLMVE. The chain crosses the membrane as a helical span at residues 155 to 175; that stretch reads LAIIGSDMQEVIGSAIAINLL. Over 176-179 the chain is Extracellular; the sequence is SAGR. A helical transmembrane segment spans residues 180 to 194; that stretch reads VPLWGGVLITIADTF. The Cytoplasmic segment spans residues 195 to 208; the sequence is VFLFLDKYGLRKLE. The helical transmembrane segment at 209–229 threads the bilayer; the sequence is AFFGFLITIMALTFGYEYITV. The Extracellular segment spans residues 230-255; it reads KPSQSQVLRGMFVPSCPGCRTPQVEQ. Residues 256–276 traverse the membrane as a helical segment; it reads AVGIVGAVIMPHNMYLHSALV. At 277-301 the chain is on the cytoplasmic side; that stretch reads KSRQVNRANKQEVREANKYFFIESC. The chain crosses the membrane as a helical span at residues 302 to 322; it reads IALFVSFIINVFVVSVFAEAF. Residues 323–360 are Extracellular-facing; it reads FEKTNKQVVEVCKNNSSPHADLFPSDNSTLAVDIYKGG. Residues Asn-336 and Asn-349 are each glycosylated (N-linked (GlcNAc...) asparagine). A helical transmembrane segment spans residues 361-381; it reads VVLGCYFGPAALYIWAVGILA. Over 382 to 408 the chain is Cytoplasmic; sequence AGQSSTMTGTYSGQFVMEGFLNLKWSR. Residues 409–429 traverse the membrane as a helical segment; sequence FARVILTRSIAIIPTLLVAVF. The Extracellular portion of the chain corresponds to 430–440; the sequence is QDVEHLTGMND. Residues 441 to 461 form a helical membrane-spanning segment; sequence FLNVLQSLQLPFALIPILTFT. Residues 462-482 lie on the Cytoplasmic side of the membrane; that stretch reads SLRPVMSEFSNGIGWRIAGGI. A helical membrane pass occupies residues 483–503; sequence LVLIVCSINMYFVVVYVQELG. Residues 504-506 lie on the Extracellular side of the membrane; sequence HVA. Residues 507-527 form a helical membrane-spanning segment; sequence LYVVAAVVSVAYLTFVFYLGW. Topologically, residues 528–568 are cytoplasmic; the sequence is QCLIALGLSFLDCGRSYRLGLTAQPELYLLNTVDADSVVSR. Positions 555–559 are required for early endosome targeting; sequence YLLNT. Residues Leu-556, Ser-564, and Ser-567 each carry the phosphoserine modification.

Belongs to the NRAMP family. As to quaternary structure, forms a complex with NDFIP1 and NEDD4L, in cortical neurons, in response to iron and cobalt exposure; this interaction leads to SLC11A2 ubiquitination by NEDD4L and proteasome-dependent degradation. Interacts with NDFIP1, NDFIP2 and WWP2; this interaction leads to SLC11A2 ubiquitination by WWP2 and subsequent proteasome-dependent degradation. Interacts with COX2 and TOM6 at the outer mitochondrion membrane. Interacts with ARRDC1; this interaction regulates the incorporation of SLC11A2 into extracellular vesicles through an ubiquitination-dependent mechanism. Interacts with ARRDC4; controls the incorporation of SLC11A2 into extracellular vesicles through an ubiquitination-dependent mechanism. In terms of processing, ubiquitinated by WWP2. Post-translationally, N-glycosylated. In terms of tissue distribution, abundantly expressed in erythroid precursor cells (at protein level). Expressed in duodenum (at protein level).

The protein resides in the golgi apparatus. It localises to the trans-Golgi network membrane. Its subcellular location is the early endosome membrane. It is found in the recycling endosome membrane. The protein localises to the cell membrane. The protein resides in the late endosome membrane. It localises to the lysosome membrane. Its subcellular location is the apical cell membrane. It is found in the mitochondrion outer membrane. The protein localises to the extracellular vesicle membrane. The catalysed reaction is Fe(2+)(in) + H(+)(in) = Fe(2+)(out) + H(+)(out). It carries out the reaction Co(2+)(out) + H(+)(out) = Co(2+)(in) + H(+)(in). It catalyses the reaction Cd(2+)(out) + H(+)(out) = Cd(2+)(in) + H(+)(in). The enzyme catalyses Mn(2+)(in) + H(+)(in) = Mn(2+)(out) + H(+)(out). The catalysed reaction is Zn(2+)(out) + H(+)(out) = Zn(2+)(in) + H(+)(in). It carries out the reaction Ni(2+)(out) + H(+)(out) = Ni(2+)(in) + H(+)(in). It catalyses the reaction H(+)(in) = H(+)(out). The enzyme catalyses Fe(2+)(in) = Fe(2+)(out). In terms of biological role, proton-coupled metal ion symporter operating with a proton to metal ion stoichiometry of 1:1. Selectively transports various divalent metal cations, in decreasing affinity: Cd(2+) &gt; Fe(2+) &gt; Co(2+), Mn(2+) &gt;&gt; Zn(2+), Ni(2+), VO(2+). Essential for maintenance of iron homeostasis by modulating intestinal absorption of dietary Fe(2+) and TF-associated endosomal Fe(2+) transport in erythroid precursors and other cells. Enables Fe(2+) and Mn(2+) ion entry into mitochondria, and is thus expected to promote mitochondrial heme synthesis, iron-sulfur cluster biogenesis and antioxidant defense. Can mediate uncoupled fluxes of either protons or metal ions. The sequence is that of Natural resistance-associated macrophage protein 2 (Slc11a2) from Mus musculus (Mouse).